Consider the following 395-residue polypeptide: tRNA (guanine-N(7)-)-methyltransferase (395 aa).

The S-adenosyl-L-methionine site is built by E126, E151, and D178. Substrate is bound by residues K204 and D234.

This sequence belongs to the class I-like SAM-binding methyltransferase superfamily. TrmB family.

It catalyses the reaction guanosine(46) in tRNA + S-adenosyl-L-methionine = N(7)-methylguanosine(46) in tRNA + S-adenosyl-L-homocysteine. It functions in the pathway tRNA modification; N(7)-methylguanine-tRNA biosynthesis. In terms of biological role, catalyzes the formation of N(7)-methylguanine at position 46 (m7G46) in tRNA. The sequence is that of tRNA (guanine-N(7)-)-methyltransferase from Campylobacter fetus subsp. fetus (strain 82-40).